Reading from the N-terminus, the 176-residue chain is NAD(P)H-quinone oxidoreductase subunit 6, chloroplastic (176 aa).

The next 5 helical transmembrane spans lie at 10 to 30 (FLLV…VLLP), 32 to 52 (PIYS…FYIL), 61 to 81 (AQLL…VMFM), 92 to 112 (LWTV…ISLI), and 152 to 172 (FFLP…GAIA).

Belongs to the complex I subunit 6 family. NDH is composed of at least 16 different subunits, 5 of which are encoded in the nucleus.

The protein resides in the plastid. Its subcellular location is the chloroplast thylakoid membrane. The catalysed reaction is a plastoquinone + NADH + (n+1) H(+)(in) = a plastoquinol + NAD(+) + n H(+)(out). It carries out the reaction a plastoquinone + NADPH + (n+1) H(+)(in) = a plastoquinol + NADP(+) + n H(+)(out). Functionally, NDH shuttles electrons from NAD(P)H:plastoquinone, via FMN and iron-sulfur (Fe-S) centers, to quinones in the photosynthetic chain and possibly in a chloroplast respiratory chain. The immediate electron acceptor for the enzyme in this species is believed to be plastoquinone. Couples the redox reaction to proton translocation, and thus conserves the redox energy in a proton gradient. This Solanum lycopersicum (Tomato) protein is NAD(P)H-quinone oxidoreductase subunit 6, chloroplastic (ndhG).